Reading from the N-terminus, the 503-residue chain is MEFSVKSGSPEKQRSACIVVGVFEPRRLSPIAEQLDKISDGYISALLRRGELEGKVGQTLLLHHVPNVLSERILLIGCGKERELDERQYKQVVQKTINTLNDTGSMEAVCFLTELHVKGRNTYWKVRQAVETAKETLYTFDQLKSNKVEARRPLRKMVFNVPTRRELTSGERAIQHGLAIAAGIKAAKDLGNMPPNICNAGYLASQARQLADNYAGAVTTRVIGEQQMKELGMNAYLAVGQGSQNESLMSVIEYKGNPNPDARPIVLVGKGLTFDAGGISLKPGEGMDEMKYDMCGAASVYGVMRMAAELRLPLNIVGVLAGCENMPGGRAYRPGDILTTMSGQTVEVLNTDAEGRLVLCDVLTYVERFEPELVVDVATLTGACVIALGHHLTGLMANHNPLASELLNAAEQAGDRAWRLPLGEEFQEQLDSNFADMANIGGRPGGAITAACFLARFTRKYNWAHLDIAGTAWRSGKAKGATGRPVAMLSQFLLNRAGLNGEE.

Residues lysine 270 and aspartate 275 each coordinate Mn(2+). Lysine 282 is an active-site residue. 3 residues coordinate Mn(2+): aspartate 293, aspartate 352, and glutamate 354. Arginine 356 is a catalytic residue.

Belongs to the peptidase M17 family. It depends on Mn(2+) as a cofactor.

It localises to the cytoplasm. The enzyme catalyses Release of an N-terminal amino acid, Xaa-|-Yaa-, in which Xaa is preferably Leu, but may be other amino acids including Pro although not Arg or Lys, and Yaa may be Pro. Amino acid amides and methyl esters are also readily hydrolyzed, but rates on arylamides are exceedingly low.. The catalysed reaction is Release of an N-terminal amino acid, preferentially leucine, but not glutamic or aspartic acids.. Presumably involved in the processing and regular turnover of intracellular proteins. Catalyzes the removal of unsubstituted N-terminal amino acids from various peptides. The protein is Probable cytosol aminopeptidase of Edwardsiella ictaluri (strain 93-146).